Reading from the N-terminus, the 233-residue chain is Proteasome subunit beta type-6 (233 aa).

A propeptide spans 1–12 (removed in mature form); sequence MDLNLDAPHSMG. The active-site Nucleophile is the threonine 13.

Belongs to the peptidase T1B family. As to quaternary structure, component of the 20S core complex of the 26S proteasome. The 26S proteasome is composed of a core protease (CP), known as the 20S proteasome, capped at one or both ends by the 19S regulatory particle (RP/PA700). The 20S proteasome core is composed of 28 subunits that are arranged in four stacked rings, resulting in a barrel-shaped structure. The two end rings are each formed by seven alpha subunits, and the two central rings are each formed by seven beta subunits. The catalytic chamber with the active sites is on the inside of the barrel.

It localises to the cytoplasm. It is found in the nucleus. It catalyses the reaction Cleavage of peptide bonds with very broad specificity.. The proteasome is a multicatalytic proteinase complex which is characterized by its ability to cleave peptides with Arg, Phe, Tyr, Leu, and Glu adjacent to the leaving group at neutral or slightly basic pH. The proteasome has an ATP-dependent proteolytic activity. This Arabidopsis thaliana (Mouse-ear cress) protein is Proteasome subunit beta type-6 (PBA1).